We begin with the raw amino-acid sequence, 601 residues long: Probable translation initiation factor IF-2 (601 aa).

The 218-residue stretch at 10–227 (LRAPIVVVLG…VLAGLAQRYL (218 aa)) folds into the tr-type G domain. Residues 19–26 (GHVDAGKT) form a G1 region. 19–26 (GHVDAGKT) is a binding site for GTP. Positions 44–48 (TMTQH) are G2. A G3 region spans residues 83-86 (DTPG). Residues 83–87 (DTPGH) and 137–140 (NKID) contribute to the GTP site. The interval 137–140 (NKID) is G4. The tract at residues 205 to 207 (SAV) is G5.

The protein belongs to the TRAFAC class translation factor GTPase superfamily. Classic translation factor GTPase family. IF-2 subfamily.

Its function is as follows. Function in general translation initiation by promoting the binding of the formylmethionine-tRNA to ribosomes. Seems to function along with eIF-2. The chain is Probable translation initiation factor IF-2 from Thermofilum pendens (strain DSM 2475 / Hrk 5).